Consider the following 60-residue polypeptide: Large ribosomal subunit protein bL32 (60 aa).

Basic residues predominate over residues 1–20 (MAVPKRKTSPSRRNMRRSHH). Positions 1 to 60 (MAVPKRKTSPSRRNMRRSHHALGANSFIEDKDTGELRRPHHVDLKTGMYNGKQILTPKED) are disordered. Residues 28 to 44 (IEDKDTGELRRPHHVDL) are compositionally biased toward basic and acidic residues.

This sequence belongs to the bacterial ribosomal protein bL32 family.

The sequence is that of Large ribosomal subunit protein bL32 from Caulobacter vibrioides (strain ATCC 19089 / CIP 103742 / CB 15) (Caulobacter crescentus).